The primary structure comprises 155 residues: Glutamyl-tRNA(Gln) amidotransferase subunit C, chloroplastic/mitochondrial (155 aa).

The N-terminal 52 residues, 1–52 (MATRALLAVIYASPNRCYISPSRIKIQSLTCSSSSHYYQRQSRKNHRIARSY), are a transit peptide targeting the chloroplast and mitochondrion.

The protein belongs to the GatC family. In terms of assembly, subunit of the heterotrimeric GatCAB amidotransferase (AdT) complex, composed of A, B and C subunits.

It localises to the mitochondrion. Its subcellular location is the plastid. It is found in the chloroplast. The catalysed reaction is L-glutamyl-tRNA(Gln) + L-glutamine + ATP + H2O = L-glutaminyl-tRNA(Gln) + L-glutamate + ADP + phosphate + H(+). Its function is as follows. Allows the formation of correctly charged Gln-tRNA(Gln) through the transamidation of misacylated Glu-tRNA(Gln) in chloroplasts and mitochondria. The reaction takes place in the presence of glutamine and ATP through an activated gamma-phospho-Glu-tRNA(Gln). The polypeptide is Glutamyl-tRNA(Gln) amidotransferase subunit C, chloroplastic/mitochondrial (Arabidopsis thaliana (Mouse-ear cress)).